A 91-amino-acid polypeptide reads, in one-letter code: MPRSLKKGPFIDLHLLKKIEVAAEKNDRKPVKTWSRRSMILPQMVGLTIAVHNGRQHVPVLVNEDMVGHKLGEFAGTRTYRGHVADKKAKR.

The protein belongs to the universal ribosomal protein uS19 family.

Protein S19 forms a complex with S13 that binds strongly to the 16S ribosomal RNA. This is Small ribosomal subunit protein uS19 from Pseudomonas syringae pv. syringae (strain B728a).